We begin with the raw amino-acid sequence, 95 residues long: Citrate lyase acyl carrier protein (95 aa).

At S14 the chain carries O-(phosphoribosyl dephospho-coenzyme A)serine.

It belongs to the CitD family. Oligomer with a subunit composition of (alpha,beta,gamma)6.

It is found in the cytoplasm. Covalent carrier of the coenzyme of citrate lyase. The protein is Citrate lyase acyl carrier protein of Haemophilus influenzae (strain ATCC 51907 / DSM 11121 / KW20 / Rd).